The primary structure comprises 235 residues: MAINALMLSSSRVGNTPYLEHAIEFIKPLSQNTKKWLFIPYAGVSVSHDAYLSMVQQGLADLSLEITSIHQSEDPKQAIRDADGIFVGGGNTFQLLNMLYQHDVLALIREQVQAGKPYVGWSAGSNITGLSIRTTNDMPIVEPPSFNALNLLPFQLNPHYSNYQAPGHNGETRAQRLLEFTVVDPLTPVIAIQEGTALWRQGDSLRLVGNKEGYLFHGKQQEVPLAAGSDLSSYL.

Active-site charge relay system residues include serine 122, aspartate 137, and histidine 159.

This sequence belongs to the peptidase S51 family.

It localises to the cytoplasm. It carries out the reaction Dipeptidase E catalyzes the hydrolysis of dipeptides Asp-|-Xaa. It does not act on peptides with N-terminal Glu, Asn or Gln, nor does it cleave isoaspartyl peptides.. In terms of biological role, hydrolyzes dipeptides containing N-terminal aspartate residues. May play a role in allowing the cell to use peptide aspartate to spare carbon otherwise required for the synthesis of the aspartate family of amino acids. The chain is Peptidase E from Shewanella denitrificans (strain OS217 / ATCC BAA-1090 / DSM 15013).